The primary structure comprises 493 residues: Protein kinase PINOID 2 (493 aa).

Residues Met1 to Lys53 form a disordered region. Residues Ile27–Asp44 are compositionally biased toward low complexity. A Protein kinase domain is found at Phe80–Phe443. Residues Leu86–Val94 and Lys120 each bind ATP. Asp216 functions as the Proton acceptor in the catalytic mechanism. Residues Gly295 to Gly306 show a composition bias toward gly residues. Disordered stretches follow at residues Gly295 to Pro320 and Glu458 to Phe493. Acidic residues predominate over residues Asp307–Glu319. Positions Lys444–Phe493 constitute an AGC-kinase C-terminal domain. The segment covering Ser474–Phe493 has biased composition (basic and acidic residues).

This sequence belongs to the protein kinase superfamily. Ser/Thr protein kinase family.

It catalyses the reaction L-seryl-[protein] + ATP = O-phospho-L-seryl-[protein] + ADP + H(+). The catalysed reaction is L-threonyl-[protein] + ATP = O-phospho-L-threonyl-[protein] + ADP + H(+). Functionally, serine/threonine-protein kinase involved in the regulation of auxin signaling. In Oryza sativa subsp. japonica (Rice), this protein is Protein kinase PINOID 2 (PID2).